The following is a 463-amino-acid chain: L-seryl-tRNA(Sec) selenium transferase (463 aa).

Lysine 295 carries the N6-(pyridoxal phosphate)lysine modification.

This sequence belongs to the SelA family. As to quaternary structure, homodecamer; pentamer of dimers. Binds only one seryl-tRNA(Sec) per dimer. Requires pyridoxal 5'-phosphate as cofactor.

It is found in the cytoplasm. The catalysed reaction is L-seryl-tRNA(Sec) + selenophosphate + H(+) = L-selenocysteinyl-tRNA(Sec) + phosphate. The protein operates within aminoacyl-tRNA biosynthesis; selenocysteinyl-tRNA(Sec) biosynthesis; selenocysteinyl-tRNA(Sec) from L-seryl-tRNA(Sec) (bacterial route): step 1/1. Functionally, converts seryl-tRNA(Sec) to selenocysteinyl-tRNA(Sec) required for selenoprotein biosynthesis. In Proteus mirabilis (strain HI4320), this protein is L-seryl-tRNA(Sec) selenium transferase.